We begin with the raw amino-acid sequence, 392 residues long: Riboflavin biosynthesis protein PYRD, chloroplastic (392 aa).

A chloroplast-targeting transit peptide spans 1-26 (MASSLVSRPHLTQRPVRAATLASATR). The region spanning 46–168 (LDDAHYMRRC…KLQGAGISVR (123 aa)) is the CMP/dCMP-type deaminase domain. H95 is a Zn(2+) binding site. E97 (proton donor) is an active-site residue. Zn(2+) contacts are provided by C120 and C129.

It depends on Zn(2+) as a cofactor.

Its subcellular location is the plastid. It localises to the chloroplast. The enzyme catalyses 2,5-diamino-6-hydroxy-4-(5-phosphoribosylamino)-pyrimidine + H2O + H(+) = 5-amino-6-(5-phospho-D-ribosylamino)uracil + NH4(+). The protein operates within cofactor biosynthesis; riboflavin biosynthesis; 5-amino-6-(D-ribitylamino)uracil from GTP: step 2/4. Its function is as follows. Monofunctional pyrimidine deaminase involved in the riboflavin biosynthesis pathway. Also has a reductase domain that lacks catalytically essential substrate-binding residues. The polypeptide is Riboflavin biosynthesis protein PYRD, chloroplastic (PYRD) (Zea mays (Maize)).